The following is a 132-amino-acid chain: ATP synthase epsilon chain (132 aa).

The protein belongs to the ATPase epsilon chain family. In terms of assembly, F-type ATPases have 2 components, CF(1) - the catalytic core - and CF(0) - the membrane proton channel. CF(1) has five subunits: alpha(3), beta(3), gamma(1), delta(1), epsilon(1). CF(0) has three main subunits: a, b and c.

It localises to the cell inner membrane. Produces ATP from ADP in the presence of a proton gradient across the membrane. The sequence is that of ATP synthase epsilon chain from Anaeromyxobacter sp. (strain Fw109-5).